A 330-amino-acid chain; its full sequence is Phosphate acyltransferase (330 aa).

The protein belongs to the PlsX family. Homodimer. Probably interacts with PlsY.

The protein resides in the cytoplasm. The enzyme catalyses a fatty acyl-[ACP] + phosphate = an acyl phosphate + holo-[ACP]. It participates in lipid metabolism; phospholipid metabolism. Its function is as follows. Catalyzes the reversible formation of acyl-phosphate (acyl-PO(4)) from acyl-[acyl-carrier-protein] (acyl-ACP). This enzyme utilizes acyl-ACP as fatty acyl donor, but not acyl-CoA. The protein is Phosphate acyltransferase of Bacillus mycoides (strain KBAB4) (Bacillus weihenstephanensis).